A 208-amino-acid polypeptide reads, in one-letter code: dITP/XTP pyrophosphatase (208 aa).

16-21 (SNNKGK) is a substrate binding site. Residue aspartate 79 is the Proton acceptor of the active site. Aspartate 79 contributes to the Mg(2+) binding site. Substrate-binding positions include serine 80, 166-169 (FGYD), lysine 189, and 194-195 (HR).

It belongs to the HAM1 NTPase family. In terms of assembly, homodimer. Mg(2+) is required as a cofactor.

It carries out the reaction XTP + H2O = XMP + diphosphate + H(+). The enzyme catalyses dITP + H2O = dIMP + diphosphate + H(+). The catalysed reaction is ITP + H2O = IMP + diphosphate + H(+). In terms of biological role, pyrophosphatase that catalyzes the hydrolysis of nucleoside triphosphates to their monophosphate derivatives, with a high preference for the non-canonical purine nucleotides XTP (xanthosine triphosphate), dITP (deoxyinosine triphosphate) and ITP. Seems to function as a house-cleaning enzyme that removes non-canonical purine nucleotides from the nucleotide pool, thus preventing their incorporation into DNA/RNA and avoiding chromosomal lesions. This Acinetobacter baumannii (strain AB307-0294) protein is dITP/XTP pyrophosphatase.